The primary structure comprises 248 residues: Anamorsin homolog (248 aa).

An N-terminal SAM-like domain region spans residues 4-130 (FKGLQKSLYI…ETGSSARLSF (127 aa)). The tract at residues 131–161 (AKKTSSVNVWKISGDDEELIDEEELLDEEDK) is linker. Residues C172, C181, C184, and C186 each coordinate [2Fe-2S] cluster. The tract at residues 172–186 (CSTTGKRKACKNCSC) is fe-S binding site A. The [4Fe-4S] cluster site is built by C209, C212, C220, and C223. 2 consecutive short sequence motifs (cx2C motif) follow at residues 209-212 (CGNC) and 220-223 (CSTC). The segment at 209 to 223 (CGNCYLGDAFRCSTC) is fe-S binding site B.

Belongs to the anamorsin family. Monomer. [2Fe-2S] cluster is required as a cofactor. The cofactor is [4Fe-4S] cluster.

It localises to the cytoplasm. It is found in the mitochondrion intermembrane space. Component of the cytosolic iron-sulfur (Fe-S) protein assembly (CIA) machinery. Required for the maturation of extramitochondrial Fe-S proteins. Part of an electron transfer chain functioning in an early step of cytosolic Fe-S biogenesis, facilitating the de novo assembly of a [4Fe-4S] cluster on the cytosolic Fe-S scaffold complex. Electrons are transferred from NADPH via a FAD- and FMN-containing diflavin oxidoreductase. Together with the diflavin oxidoreductase, also required for the assembly of the diferric tyrosyl radical cofactor of ribonucleotide reductase (RNR), probably by providing electrons for reduction during radical cofactor maturation in the catalytic small subunit. The sequence is that of Anamorsin homolog from Drosophila virilis (Fruit fly).